A 319-amino-acid polypeptide reads, in one-letter code: Ferrochelatase (319 aa).

Positions 194 and 275 each coordinate Fe cation.

It belongs to the ferrochelatase family.

It is found in the cytoplasm. It catalyses the reaction heme b + 2 H(+) = protoporphyrin IX + Fe(2+). It functions in the pathway porphyrin-containing compound metabolism; protoheme biosynthesis; protoheme from protoporphyrin-IX: step 1/1. In terms of biological role, catalyzes the ferrous insertion into protoporphyrin IX. This chain is Ferrochelatase, found in Hamiltonella defensa subsp. Acyrthosiphon pisum (strain 5AT).